The sequence spans 162 residues: NADH-ubiquinone oxidoreductase 24 kDa subunit homolog C11E3.12, mitochondrial (162 aa).

Residues cysteine 88, cysteine 93, cysteine 125, and cysteine 129 each contribute to the [2Fe-2S] cluster site.

This sequence belongs to the complex I 24 kDa subunit family. The cofactor is [2Fe-2S] cluster.

It localises to the mitochondrion. The polypeptide is NADH-ubiquinone oxidoreductase 24 kDa subunit homolog C11E3.12, mitochondrial (Schizosaccharomyces pombe (strain 972 / ATCC 24843) (Fission yeast)).